Reading from the N-terminus, the 270-residue chain is Energy-coupling factor transporter ATP-binding protein EcfA (270 aa).

Residues 5–238 form the ABC transporter domain; it reads VEIENLTFFY…QLLEQNGLKA (234 aa). 38-45 is an ATP binding site; it reads GHNGAGKS.

This sequence belongs to the ABC transporter superfamily. Energy-coupling factor EcfA family. In terms of assembly, forms a stable energy-coupling factor (ECF) transporter complex composed of 2 membrane-embedded substrate-binding proteins (S component), 2 ATP-binding proteins (A component) and 2 transmembrane proteins (T component).

Its subcellular location is the cell membrane. In terms of biological role, ATP-binding (A) component of a common energy-coupling factor (ECF) ABC-transporter complex. Unlike classic ABC transporters this ECF transporter provides the energy necessary to transport a number of different substrates. This chain is Energy-coupling factor transporter ATP-binding protein EcfA, found in Carboxydothermus hydrogenoformans (strain ATCC BAA-161 / DSM 6008 / Z-2901).